Consider the following 312-residue polypeptide: Probable HTH-type transcriptional regulator LrhA (312 aa).

Residues 11–68 (LDLDLLRTFVAVADLNTFAAAAAAVCRTQSAVSQQMQRLEQLVGKELFARHGRNKLLT) enclose the HTH lysR-type domain. The segment at residues 28 to 47 (FAAAAAAVCRTQSAVSQQMQ) is a DNA-binding region (H-T-H motif).

This sequence belongs to the LysR transcriptional regulatory family.

Its function is as follows. Not known, does not seem to act on the proton translocating NADH dehydrogenase genes (nuoA-N) which are part of the lrhA operon. This is Probable HTH-type transcriptional regulator LrhA (lrhA) from Escherichia coli (strain K12).